The following is a 397-amino-acid chain: FAD-dependent monooxygenase trt8 (397 aa).

Tyr53 is a catalytic residue. 2 residues coordinate FAD: Asp145 and Ala158.

The protein belongs to the paxM FAD-dependent monooxygenase family. It depends on FAD as a cofactor.

It functions in the pathway secondary metabolite biosynthesis; terpenoid biosynthesis. Functionally, FAD-dependent monooxygenase; part of the gene cluster that mediates the biosynthesis of terretonin, a fungal meroterpenoid that acts as a mycotoxin. The first step of the pathway is the synthesis of 3,5-dimethylorsellinic acid (DMOA) by the polyketide synthase trt4. DMOA is then prenylated into farnesyl-DMOA by the polyprenyl transferase trt2. Methylation by the methyltransferase trt5 then leads to farnesyl-DMOA methyl ester which is further subject to epoxidation by the FAD-dependent monooxygenase trt8 to yield epoxyfarnesyl-DMOA methyl ester. Cyclization of epoxyfarnesyl-DMOA methyl ester by the terpene cyclase trt1 leads to a tetracycle intermediate which is in turn converted to preterretonin. Dehydrogenase trt9 comes next to transform preterretonin to preterrenoid. The FAD-dependent monooxygenase trt3 is then required for the C-hydroxylation at C16 of preterrenoid to yield terrenoid. The cytochrome P450 trt6 catalyzes three successive oxidations to transform terrenoid into an unstable intermediate, which then undergoes the D-ring expansion and unusual rearrangement of the methoxy group to afford the core skeleton of terretonin. Trt14 catalyzes the D-ring expansion of terretonin involving intramolecular methoxy rearrangement as well as the hydrolysis of the expanded D-ring and the methyl ester moiety. Finally, the nonheme iron-dependent dioxygenase trt7 accomplishes the last two oxidation reactions steps to complete the biosynthesis of terretonin. Terretonin C is produced via spontaneous decarboxylation of the terretonin precursor. Another shunt product of the terretonin biosynthesis is dihydrofarnesyl-DMOA, derived from epoxyfarnesyl-DMOA through hydrolysis of the epoxide. The chain is FAD-dependent monooxygenase trt8 from Aspergillus terreus (strain NIH 2624 / FGSC A1156).